Reading from the N-terminus, the 507-residue chain is Phosphoprotein (507 aa).

2 positions are modified to phosphoserine: Ser86 and Ser151. Residues 137-160 show a composition bias toward acidic residues; that stretch reads DGVEVWGGDEESENSDVDSGEPDP. Positions 137–307 are disordered; the sequence is DGVEVWGGDE…QSNIEPEDDY (171 aa). Basic and acidic residues-rich tracts occupy residues 189–199 and 222–233; these read EIQKLLEDQSR and TASEKPIKKGTD. Composition is skewed to low complexity over residues 236 to 252 and 266 to 278; these read STSSGTMAESSSTGGAT and NASAENALASASN. Polar residues predominate over residues 279–301; that stretch reads VSPTQGSKTESGTTTSRISQSNI. The segment at 304-376 is multimerization; the sequence is EDDYDDELFS…LSSVMIAIPG (73 aa). The interaction with the nucleocapsid (N-RNA) stretch occupies residues 459–507; sequence ASRSVIRSIIKSSHLGEDRKDYLMSLLNDIQGSKDLAQFHQMLVKILKN.

This sequence belongs to the morbillivirus P protein family. In terms of assembly, homotetramer. Interacts (via multimerization domain) with polymerase L; this interaction forms the polymerase L-P complex. Interacts (via N-terminus) with N0 (via Ncore); this interaction allows P to chaperon N0 to avoid N polymerization before encapsidation. Interacts (via C-terminus) with N-RNA template; this interaction positions the polymerase on the template for both transcription and replication. In terms of processing, phosphorylation on serines by host CK2 is necessary for the formation of viral factories.

Functionally, essential cofactor of the RNA polymerase L that plays a central role in the transcription and replication by forming the polymerase complex with RNA polymerase L and recruiting L to the genomic N-RNA template for RNA synthesis. Also plays a central role in the encapsidation of nascent RNA chains by forming the encapsidation complex with the nucleocapsid protein N (N-P complex). Acts as a chaperone for newly synthesized free N protein, so-called N0, allowing encapsidation of nascent RNA chains during replication. The nucleoprotein protein N prevents excessive phosphorylation of P, which leads to down-regulation of viral transcription/ replication. Participates, together with N, in the formation of viral factories (viroplasms), which are large inclusions in the host cytoplasm where replication takes place. This chain is Phosphoprotein (P/V), found in Bos indicus (Zebu).